We begin with the raw amino-acid sequence, 115 residues long: NADH-ubiquinone oxidoreductase chain 3 (115 aa).

3 helical membrane-spanning segments follow: residues 4–24 (FIVM…AFWL), 55–75 (FFLV…LLPL), and 86–106 (ITML…AYEW).

This sequence belongs to the complex I subunit 3 family. Core subunit of respiratory chain NADH dehydrogenase (Complex I) which is composed of 45 different subunits. Interacts with TMEM186. Interacts with TMEM242.

It is found in the mitochondrion inner membrane. It carries out the reaction a ubiquinone + NADH + 5 H(+)(in) = a ubiquinol + NAD(+) + 4 H(+)(out). Functionally, core subunit of the mitochondrial membrane respiratory chain NADH dehydrogenase (Complex I) which catalyzes electron transfer from NADH through the respiratory chain, using ubiquinone as an electron acceptor. Essential for the catalytic activity of complex I. This Reithrodontomys fulvescens (Fulvous harvest mouse) protein is NADH-ubiquinone oxidoreductase chain 3.